Consider the following 807-residue polypeptide: Centrosomal protein of 97 kDa (807 aa).

7 LRR repeats span residues 34-55, 56-77, 78-99, 100-121, 122-143, 144-165, and 168-189; these read DTQT…EKCR, NLVQ…AKLI, HLRV…KDLV, HLEW…NSST, SLQH…SKLK, SLKT…SACL, and SLTI…AFLA. The 39-residue stretch at 208 to 246 folds into the LRRCT domain; the sequence is TPSIPGFDYRPFIVSWCLNLKVLDGYVVSQKESLKAEWL. The disordered stretch occupies residues 306–330; that stretch reads RSDGYLTSSTPNKRLPLSTEHHSPT. Residues 519–548 enclose the IQ domain; it reads ISKAATKLQSCWRGFYARKYNPKVKDVCYE. Positions 607–623 are enriched in polar residues; the sequence is TANSSENDLPSASNSKH. The segment at 607-756 is disordered; that stretch reads TANSSENDLP…RPEITTCSDN (150 aa). A compositionally biased stretch (basic and acidic residues) spans 681-690; it reads TGRHYNDKVP. The segment covering 704–724 has biased composition (polar residues); sequence SQSSKDSFTSEQDSSLLQQYL.

It localises to the cytoplasm. The protein resides in the cytoskeleton. It is found in the microtubule organizing center. The protein localises to the centrosome. Acts as a key negative regulator of ciliogenesis in collaboration with ccp110 by capping the mother centriole thereby preventing cilia formation. Required for recruitment of ccp110 to the centrosome. The protein is Centrosomal protein of 97 kDa (cep97) of Xenopus laevis (African clawed frog).